The following is a 259-amino-acid chain: Deoxyribose-phosphate aldolase (259 aa).

D102 acts as the Proton donor/acceptor in catalysis. The active-site Schiff-base intermediate with acetaldehyde is K167. K201 functions as the Proton donor/acceptor in the catalytic mechanism.

This sequence belongs to the DeoC/FbaB aldolase family. DeoC type 2 subfamily.

It localises to the cytoplasm. It catalyses the reaction 2-deoxy-D-ribose 5-phosphate = D-glyceraldehyde 3-phosphate + acetaldehyde. Its pathway is carbohydrate degradation; 2-deoxy-D-ribose 1-phosphate degradation; D-glyceraldehyde 3-phosphate and acetaldehyde from 2-deoxy-alpha-D-ribose 1-phosphate: step 2/2. In terms of biological role, catalyzes a reversible aldol reaction between acetaldehyde and D-glyceraldehyde 3-phosphate to generate 2-deoxy-D-ribose 5-phosphate. This Escherichia fergusonii (strain ATCC 35469 / DSM 13698 / CCUG 18766 / IAM 14443 / JCM 21226 / LMG 7866 / NBRC 102419 / NCTC 12128 / CDC 0568-73) protein is Deoxyribose-phosphate aldolase.